A 301-amino-acid polypeptide reads, in one-letter code: Acetylglutamate kinase (301 aa).

Substrate contacts are provided by residues 68–69 (GG), Arg-90, and Asn-195.

The protein belongs to the acetylglutamate kinase family. ArgB subfamily.

It is found in the cytoplasm. It carries out the reaction N-acetyl-L-glutamate + ATP = N-acetyl-L-glutamyl 5-phosphate + ADP. It functions in the pathway amino-acid biosynthesis; L-arginine biosynthesis; N(2)-acetyl-L-ornithine from L-glutamate: step 2/4. Its function is as follows. Catalyzes the ATP-dependent phosphorylation of N-acetyl-L-glutamate. This Pseudomonas fluorescens (strain SBW25) protein is Acetylglutamate kinase.